Here is a 159-residue protein sequence, read N- to C-terminus: Ribosomal RNA large subunit methyltransferase H (159 aa).

S-adenosyl-L-methionine is bound by residues L76, G108, and 127-132 (FSKMTF).

Belongs to the RNA methyltransferase RlmH family. In terms of assembly, homodimer.

Its subcellular location is the cytoplasm. The enzyme catalyses pseudouridine(1915) in 23S rRNA + S-adenosyl-L-methionine = N(3)-methylpseudouridine(1915) in 23S rRNA + S-adenosyl-L-homocysteine + H(+). In terms of biological role, specifically methylates the pseudouridine at position 1915 (m3Psi1915) in 23S rRNA. The polypeptide is Ribosomal RNA large subunit methyltransferase H (Bacillus subtilis (strain 168)).